The following is a 286-amino-acid chain: MQGWKTIVGKLMSRYDFPLPDLSVQAEDKILGGVPTRIYTPPDVADPPLALYFHAGGWVMGSIDEEDGFVRTLCKLARTRIFSVGYRLAPEFRFPMALDDCLTVARSVLETYPVQSICFIGASAGGNMAFSTALTLVSDGLGDRVQGVVALAPVTVHPDSVSADNRDRGEYTSYEENDRLTINTGSAMRSFFDCYGAPPDDPRLSCLLHPGLGKLNKVYMAVGDADTLRDDVRLMRDALVALEVPVKCDEYPGYPHFSWLFPSPALREHQALFFGNLLSGICWVCE.

Residues 54–56 (HAG) carry the Involved in the stabilization of the negatively charged intermediate by the formation of the oxyanion hole motif. Catalysis depends on residues Ser-123, Asp-226, and His-256.

The protein belongs to the 'GDXG' lipolytic enzyme family.

The enzyme catalyses (2S,3S)-versiconal hemiacetal acetate + H2O = (2S-3S)-versiconal hemiacetal + acetate + H(+). The catalysed reaction is (3S)-versiconol acetate + H2O = (S)-versiconol + acetate + H(+). It participates in mycotoxin biosynthesis; sterigmatocystin biosynthesis. Esterase; part of the gene cluster that mediates the biosynthesis of sterigmatocystin (ST), a polyketide-derived furanocoumarin which is part of the most toxic and carcinogenic compounds among the known mycotoxins. The first step in the biosynthesis of sterigmatocystin is the production of hexanoate by the fatty acid synthase (FAS) units stcJ and stcK. The polyketide backbone is assembled by the non-reducing polyketide synthase stcA by condensation of the starter hexanoyl-CoA and 7 malonyl-CoA extender units followed by cyclization and release of norsolorinic acid. Norsolorinic acid is the first stable intermediate in the biosynthesis of sterigmatocystin and is converted into averantin (AVN) by the ketoreductase stcE which reduces the hexanoate ketone to an alcohol. Averantin is then oxidized into 5'-hydroxyaverantin (HAVN) by the cytochrome P450 monooxygenase stcF. 5'-hydroxyaverantin is further converted to 5'-oxyaverantin (OAVN) by the 5'-hydroxyaverantin dehydrogenase stcG. The next step is the conversion of OAVN into averufin (AVF) which is catalyzed by a yet to be identified enzyme. The cytochrome P450 monooxygenase stcB and the flavin-binding monooxygenase stcW are both required for the conversion of averufin to 1-hydroxyversicolorone. The esterase stcI probably catalyzes the formation of versiconal hemiacetal acetate from 1-hydroxyversicolorone. The oxydoreductase stcN then probably catalyzes the biosynthetic step from versiconal to versicolorin B (VERB). The next step is performed by the versicolorin B desaturase stcL to produce versicolorin A (VERA). The ketoreductase stcU and the cytochrome P450 monooxygenase stcS are involved in the conversion of versicolorin A to demethylsterigmatocystin. The Baeyer-Villiger oxidas stcQ and the reductase stcR might be involved in the biosynthetic step from versicolorin A to demethylsterigmatocystin. The final step in the biosynthesis of sterigmatocystin is the methylation of demethylsterigmatocystin catalyzed by the methyltransferase stcP. This Emericella nidulans (strain FGSC A4 / ATCC 38163 / CBS 112.46 / NRRL 194 / M139) (Aspergillus nidulans) protein is Versiconal hemiacetal acetate esterase stcI.